The primary structure comprises 55 residues: Ferredoxin (55 aa).

4Fe-4S ferredoxin-type domains lie at 2–27 (YKIT…SESD) and 28–55 (AVRV…IVEG). [4Fe-4S] cluster contacts are provided by Cys8, Cys11, Cys14, Cys18, Cys37, Cys40, Cys43, and Cys47.

Requires [4Fe-4S] cluster as cofactor.

In terms of biological role, ferredoxins are iron-sulfur proteins that transfer electrons in a wide variety of metabolic reactions. The protein is Ferredoxin of Clostridium sp. (strain M-E).